A 363-amino-acid polypeptide reads, in one-letter code: UDP-3-O-acylglucosamine N-acyltransferase (363 aa).

The active-site Proton acceptor is histidine 266.

Belongs to the transferase hexapeptide repeat family. LpxD subfamily. In terms of assembly, homotrimer.

The enzyme catalyses a UDP-3-O-[(3R)-3-hydroxyacyl]-alpha-D-glucosamine + a (3R)-hydroxyacyl-[ACP] = a UDP-2-N,3-O-bis[(3R)-3-hydroxyacyl]-alpha-D-glucosamine + holo-[ACP] + H(+). The protein operates within bacterial outer membrane biogenesis; LPS lipid A biosynthesis. Catalyzes the N-acylation of UDP-3-O-acylglucosamine using 3-hydroxyacyl-ACP as the acyl donor. Is involved in the biosynthesis of lipid A, a phosphorylated glycolipid that anchors the lipopolysaccharide to the outer membrane of the cell. This chain is UDP-3-O-acylglucosamine N-acyltransferase, found in Bordetella parapertussis (strain 12822 / ATCC BAA-587 / NCTC 13253).